We begin with the raw amino-acid sequence, 1195 residues long: EST/SMG-like protein 2 (1195 aa).

Composition is skewed to polar residues over residues 1–10 (MPETSVQNPL), 18–35 (TRSM…SATP), and 55–68 (VLNP…SNSV). Disordered regions lie at residues 1-38 (MPET…PSFP), 55-130 (VLNP…VGIT), 179-268 (SKSE…PASN), and 610-643 (DKKE…DEIM). 2 stretches are compositionally biased toward basic and acidic residues: residues 83–109 (RFSD…EKNP) and 197–208 (INDKDNSARDQD). Composition is skewed to low complexity over residues 210-252 (NNSG…NNSD) and 619-629 (NNDSSVTESST). Positions 1025 to 1164 (TYFVFDATSW…LISDDDAMKK (140 aa)) constitute a PINc domain.

In terms of assembly, transiently interacts with PEX14.

The protein resides in the cytoplasm. It is found in the nucleus. The protein localises to the peroxisome. Functionally, may be involved in the regulation of gene expression responses of environment-sensing pathways. The polypeptide is EST/SMG-like protein 2 (Saccharomyces cerevisiae (strain ATCC 204508 / S288c) (Baker's yeast)).